The following is a 483-amino-acid chain: MLTLDTLNTMLAVSEEGMVEEMILALLASPQLVIFFEKFPRLKNAVTADLPRWREALRSRLKDARVPPELTEEVMCYQQSQLLSTPQFIVQLPQILALLHRLHSPYAAQAKQLTESNSTFTPALHTLFLQRWRLSLVVQATTLNQQLLEEEREQLLSDVQERMTLSGQLEPTLAENDNAAGRLWDMSAGQLKRGDYQLIVKYGEFLAAQPELMQLAEQLGRSREAKSVPKKDAPMETFRTLVREPATVPEQVDGIQQGDDILRLLPPELATLGITELEYEFYRRLVEKQLLTYRLHGEAWREKVTERPVVHQDVDEQPRGPFIVCVDTSGSMGGFNEQCAKAFCLALMRVALADNRRCFIMLFSTDVVRYELSGPEGIEQAIRFLSQRFRGGTDIASCFRAIIERMQGREWFDADAVVISDFIAQRLPDDVVSKVGELQRLHQHRFHAVAMSAHGKPGIMRIFDHIWRFDTGMRSRLLRRWRR.

This sequence belongs to the ViaA family. In terms of assembly, homodimer. Interacts with RavA.

Its subcellular location is the cytoplasm. Its function is as follows. Component of the RavA-ViaA chaperone complex, which may act on the membrane to optimize the function of some of the respiratory chains. ViaA stimulates the ATPase activity of RavA. The chain is Regulatory protein ViaA from Salmonella dublin (strain CT_02021853).